Here is a 319-residue protein sequence, read N- to C-terminus: tRNA dimethylallyltransferase (319 aa).

9–16 is an ATP binding site; that stretch reads GPTAVGKS. Residue 11 to 16 participates in substrate binding; it reads TAVGKS. The tract at residues 39–42 is interaction with substrate tRNA; that stretch reads DSMQ.

The protein belongs to the IPP transferase family. As to quaternary structure, monomer. It depends on Mg(2+) as a cofactor.

It carries out the reaction adenosine(37) in tRNA + dimethylallyl diphosphate = N(6)-dimethylallyladenosine(37) in tRNA + diphosphate. Its function is as follows. Catalyzes the transfer of a dimethylallyl group onto the adenine at position 37 in tRNAs that read codons beginning with uridine, leading to the formation of N6-(dimethylallyl)adenosine (i(6)A). The sequence is that of tRNA dimethylallyltransferase from Thermobifida fusca (strain YX).